A 321-amino-acid chain; its full sequence is Phospho-N-acetylmuramoyl-pentapeptide-transferase (321 aa).

A run of 10 helical transmembrane segments spans residues 6–26, 54–74, 77–97, 117–137, 143–163, 175–195, 200–220, 226–246, 251–271, and 301–321; these read IFIP…LFIG, MGGV…GLFF, FTPS…LGYL, LIGQ…EGFS, FGVA…FWLV, IDGL…IIAW, FDVV…FPYN, IFMG…ISII, WTLL…ILQV, and IDFV…WILF.

It belongs to the glycosyltransferase 4 family. MraY subfamily. Mg(2+) serves as cofactor.

It is found in the cell membrane. It catalyses the reaction UDP-N-acetyl-alpha-D-muramoyl-L-alanyl-gamma-D-glutamyl-L-lysyl-D-alanyl-D-alanine + di-trans,octa-cis-undecaprenyl phosphate = Mur2Ac(oyl-L-Ala-gamma-D-Glu-L-Lys-D-Ala-D-Ala)-di-trans,octa-cis-undecaprenyl diphosphate + UMP. The protein operates within cell wall biogenesis; peptidoglycan biosynthesis. In terms of biological role, catalyzes the initial step of the lipid cycle reactions in the biosynthesis of the cell wall peptidoglycan: transfers peptidoglycan precursor phospho-MurNAc-pentapeptide from UDP-MurNAc-pentapeptide onto the lipid carrier undecaprenyl phosphate, yielding undecaprenyl-pyrophosphoryl-MurNAc-pentapeptide, known as lipid I. The chain is Phospho-N-acetylmuramoyl-pentapeptide-transferase from Enterococcus faecalis (strain ATCC 700802 / V583).